Consider the following 940-residue polypeptide: Isoleucine--tRNA ligase (940 aa).

Residues 58 to 68 carry the 'HIGH' region motif; it reads PYANGSIHIGH. E564 is an L-isoleucyl-5'-AMP binding site. The 'KMSKS' region motif lies at 605–609; the sequence is KMSKS. K608 contacts ATP. Zn(2+) contacts are provided by C903, C906, C923, and C926.

Belongs to the class-I aminoacyl-tRNA synthetase family. IleS type 1 subfamily. As to quaternary structure, monomer. Zn(2+) is required as a cofactor.

It localises to the cytoplasm. The catalysed reaction is tRNA(Ile) + L-isoleucine + ATP = L-isoleucyl-tRNA(Ile) + AMP + diphosphate. Its function is as follows. Catalyzes the attachment of isoleucine to tRNA(Ile). As IleRS can inadvertently accommodate and process structurally similar amino acids such as valine, to avoid such errors it has two additional distinct tRNA(Ile)-dependent editing activities. One activity is designated as 'pretransfer' editing and involves the hydrolysis of activated Val-AMP. The other activity is designated 'posttransfer' editing and involves deacylation of mischarged Val-tRNA(Ile). In Shewanella sp. (strain ANA-3), this protein is Isoleucine--tRNA ligase.